The chain runs to 129 residues: Omega-scoloptoxin(05)-Ssm1a (129 aa).

The N-terminal stretch at 1-24 is a signal peptide; it reads MPSLCIIALFGTLTFYTLIPSIHT. Positions 25 to 46 are excised as a propeptide; that stretch reads LKCVRCDGPMSNYDCKTTYPAA.

It belongs to the scoloptoxin-05 family. In terms of processing, contains 3 disulfide bonds. Expressed by the venom gland.

The protein resides in the secreted. In terms of biological role, toxin that increase voltage-gated calcium channel (Cav) currents in DRG neurons by 70% and 120%, when 1 uM and 10 uM are tested, respectively. In Scolopendra mutilans (Chinese red-headed centipede), this protein is Omega-scoloptoxin(05)-Ssm1a.